The sequence spans 564 residues: Hsp70-Hsp90 organising protein (564 aa).

TPR repeat units follow at residues 7–40 (AQRL…DPLD), 42–74 (VLYS…KKDW), and 76–108 (KGYI…DPNN). A coiled-coil region spans residues 197 to 239 (EGNDAEERQRQQREEEERRKKKEEEERKKKEEEEMKKQNRTPE). Positions 199–247 (NDAEERQRQQREEEERRKKKEEEERKKKEEEEMKKQNRTPEQIQGDEHK) are disordered. Over residues 201 to 233 (AEERQRQQREEEERRKKKEEEERKKKEEEEMKK) the composition is skewed to basic and acidic residues. TPR repeat units lie at residues 243–276 (GDEH…NPND), 278–310 (MYHY…RYNF), 318–351 (AKLY…DNNR), 378–411 (AEEH…NPND), 413–445 (KLYS…DPTF), and 446–479 (VKAY…DPNN). The STI1 domain occupies 513–552 (DPEIQQIISDPQFQIILQKLNENPNSISEYIKDPKIFNGL).

Monomer. Homodimer. Forms a complex composed of HOP and chaperones HSP70 and HSP90; the interaction is stronger in the absence of ATP. Interacts (via TPR 1, 2, 3, 7, 8 and 9 repeats) with HSP70 (via C-terminus); the interaction is direct and is stronger in the absence of ATP. Interacts (via TPR 4, 5 and 6 repeats) with HSP90 (via C-terminus); the interaction is direct.

The protein localises to the cytoplasm. In terms of biological role, acts as a co-chaperone and mediates the association of the chaperones HSP70 and HSP90 probably facilitating substrate transfer from HSP70 to HSP90. Stimulates HSP70 ATPase activity and, in contrast, inhibits HSP90 ATPase activity. This Plasmodium falciparum (isolate 3D7) protein is Hsp70-Hsp90 organising protein.